The chain runs to 189 residues: Probable thymidylate kinase 1 (189 aa).

Glycine 9–threonine 16 is a binding site for ATP.

It belongs to the thymidylate kinase family.

It catalyses the reaction dTMP + ATP = dTDP + ADP. The chain is Probable thymidylate kinase 1 (tmk1) from Saccharolobus solfataricus (strain ATCC 35092 / DSM 1617 / JCM 11322 / P2) (Sulfolobus solfataricus).